Consider the following 139-residue polypeptide: Large ribosomal subunit protein uL16 (139 aa).

The protein belongs to the universal ribosomal protein uL16 family. In terms of assembly, part of the 50S ribosomal subunit.

Functionally, binds 23S rRNA and is also seen to make contacts with the A and possibly P site tRNAs. This Protochlamydia amoebophila (strain UWE25) protein is Large ribosomal subunit protein uL16.